The primary structure comprises 296 residues: MTTTLTRPADGEGSVQVQQDASVRIQEGALVIAVYGKGGIGKSTTSSNLSAAFSKLGKRVLQIGCDPKHDSTFTLTHRMVPTVIDILEEVDFHSEELRPDDFMFEGFNGVKCVESGGPPAGTGCGGYVTGQTVKLLKEHHLLEDTDVVIFDVLGDVVCGGFAAPLQHANYCLIVTANDFDSIFAMNRIVAAINAKAKNYKVRLGGVIANRSAELDQIEKFNQQTGLKTMAHFKNVDAIRRSRLKKCTIFEMDSSDEGVMECQNEYLSLAQKMLDNVEPLEAEPLKDREIFDLLGFD.

Residues Gly39 to Thr44 and Lys68 contribute to the ATP site. Ser43 is a Mg(2+) binding site. [4Fe-4S] cluster contacts are provided by Cys124 and Cys158. Position 209 to 210 (Asn209 to Arg210) interacts with ATP.

Belongs to the NifH/BchL/ChlL family. As to quaternary structure, homodimer. Protochlorophyllide reductase is composed of three subunits; ChlL, ChlN and ChlB. The cofactor is [4Fe-4S] cluster.

The catalysed reaction is chlorophyllide a + oxidized 2[4Fe-4S]-[ferredoxin] + 2 ADP + 2 phosphate = protochlorophyllide a + reduced 2[4Fe-4S]-[ferredoxin] + 2 ATP + 2 H2O. Its pathway is porphyrin-containing compound metabolism; chlorophyll biosynthesis (light-independent). Its function is as follows. Component of the dark-operative protochlorophyllide reductase (DPOR) that uses Mg-ATP and reduced ferredoxin to reduce ring D of protochlorophyllide (Pchlide) to form chlorophyllide a (Chlide). This reaction is light-independent. The L component serves as a unique electron donor to the NB-component of the complex, and binds Mg-ATP. The polypeptide is Light-independent protochlorophyllide reductase iron-sulfur ATP-binding protein (Prochlorococcus marinus (strain MIT 9313)).